We begin with the raw amino-acid sequence, 445 residues long: FAS-associated factor 2 (445 aa).

Residue Ala-2 is modified to N-acetylalanine. Residues 12 to 48 (EQTEKLLQFQDLTGIESMDQCRHTLEQHNWNIEAAVQ) form the UBA domain. Residue Lys-167 is modified to N6-acetyllysine. The stretch at 275–350 (SERLEREERN…EEKERKLECL (76 aa)) forms a coiled coil. A disordered region spans residues 299–361 (ASLRADQEKE…PEPSPDDPES (63 aa)). The span at 303–348 (ADQEKERKKREERERKRRKEEEVQQQKLAEERRRQNLQEEKERKLE) shows a compositional bias: basic and acidic residues. Residues 357–439 (DDPESVKIIF…GLSHTEVLFV (83 aa)) enclose the UBX domain.

As to quaternary structure, identified in a complex that contains SEL1L, OS9, FAF2/UBXD8, UBE2J1/UBC6E and AUP1. Interacts with YOD1. Interacts (via N-terminus) with UBQLN2 (via C-terminus). Interacts with PNPLA2 and UBAC2. Interacts with ZFAND2B; probably through VCP. Interacts with LMBR1L. In terms of tissue distribution, broadly expressed, with highest levels in brain.

The protein localises to the cytoplasm. Its subcellular location is the lipid droplet. It is found in the endoplasmic reticulum. Its function is as follows. Plays an important role in endoplasmic reticulum-associated degradation (ERAD) that mediates ubiquitin-dependent degradation of misfolded endoplasmic reticulum proteins. By controlling the steady-state expression of the IGF1R receptor, indirectly regulates the insulin-like growth factor receptor signaling pathway. Involved in inhibition of lipid droplet degradation by binding to phospholipase PNPL2 and inhibiting its activity by promoting dissociation of PNPL2 from its endogenous activator, ABHD5 which inhibits the rate of triacylglycerol hydrolysis. Involved in stress granule disassembly: associates with ubiquitinated G3BP1 in response to heat shock, thereby promoting interaction between ubiquitinated G3BP1 and VCP, followed by G3BP1 extraction from stress granules and stress granule disassembly. The sequence is that of FAS-associated factor 2 from Homo sapiens (Human).